Consider the following 402-residue polypeptide: Phosphopentomutase (402 aa).

Mn(2+) is bound by residues aspartate 10, aspartate 301, histidine 306, aspartate 342, histidine 343, and histidine 354.

The protein belongs to the phosphopentomutase family. Mn(2+) is required as a cofactor.

It localises to the cytoplasm. The catalysed reaction is 2-deoxy-alpha-D-ribose 1-phosphate = 2-deoxy-D-ribose 5-phosphate. It carries out the reaction alpha-D-ribose 1-phosphate = D-ribose 5-phosphate. Its pathway is carbohydrate degradation; 2-deoxy-D-ribose 1-phosphate degradation; D-glyceraldehyde 3-phosphate and acetaldehyde from 2-deoxy-alpha-D-ribose 1-phosphate: step 1/2. Functionally, isomerase that catalyzes the conversion of deoxy-ribose 1-phosphate (dRib-1-P) and ribose 1-phosphate (Rib-1-P) to deoxy-ribose 5-phosphate (dRib-5-P) and ribose 5-phosphate (Rib-5-P), respectively. The sequence is that of Phosphopentomutase from Aeromonas hydrophila subsp. hydrophila (strain ATCC 7966 / DSM 30187 / BCRC 13018 / CCUG 14551 / JCM 1027 / KCTC 2358 / NCIMB 9240 / NCTC 8049).